We begin with the raw amino-acid sequence, 552 residues long: Putative transport protein HS_1470 (552 aa).

Transmembrane regions (helical) follow at residues 4–24 (IAIT…IGHW), 28–48 (GVGL…HFMN), 67–87 (LILF…ASLL), 95–115 (GLAT…YKVV), and 157–177 (MAYA…MWLI). RCK C-terminal domains follow at residues 190-275 (KQFQ…VIGE) and 277-360 (IDMP…IIGN). 6 consecutive transmembrane segments (helical) span residues 370–390 (MLPV…PFYI), 402–424 (AGGP…LYWF), 438–458 (IVLF…DTLV), 463–483 (LEWM…TGII), 495–515 (LCGL…ANAI), and 529–549 (VYPL…ILLW).

The protein belongs to the AAE transporter (TC 2.A.81) family. YidE subfamily.

The protein resides in the cell membrane. The sequence is that of Putative transport protein HS_1470 from Histophilus somni (strain 129Pt) (Haemophilus somnus).